We begin with the raw amino-acid sequence, 352 residues long: Cyclin-O (352 aa).

The segment at 1-40 is disordered; that stretch reads MVTPCPASPGSPAAGAGRRDSHQNLRAPVKKSRRPCLRRK. Basic residues predominate over residues 28–40; sequence PVKKSRRPCLRRK. At S83 the chain carries Phosphoserine.

It belongs to the cyclin family. As to expression, present in respiratory cells (at protein level). Expressed in multiciliated tissue in brain and fallopian tube (at protein level). Highly expressed in oocytes.

The protein localises to the cytoplasm. Its subcellular location is the nucleus. It is found in the nucleolus. Specifically required for generation of multiciliated cells, possibly by promoting a cell cycle state compatible with centriole amplification and maturation. Acts downstream of MCIDAS to promote mother centriole amplification and maturation in preparation for apical docking. May be involved in apoptosis in lymphoid cells; however, this result requires additional evidences in vivo. May be involved in oocyte meiotic resumption in oocytes. This is Cyclin-O from Mus musculus (Mouse).